Reading from the N-terminus, the 681-residue chain is UvrABC system protein B (681 aa).

Residues 30-419 (QGVRDGRHWQ…GEVVELLVRP (390 aa)) form the Helicase ATP-binding domain. Position 43–50 (43–50 (GVTGSGKT)) interacts with ATP. Positions 96–119 (YYDFYQPEAYLPSLDKYIAKDLRI) match the Beta-hairpin motif. In terms of domain architecture, Helicase C-terminal spans 435-601 (QIDNLLAEIR…SIVKSVDQIL (167 aa)). The UVR domain maps to 641–676 (YAIVEGLRLEMQEAAEHMEYEKAAYLRDEITKMEQV).

Belongs to the UvrB family. In terms of assembly, forms a heterotetramer with UvrA during the search for lesions. Interacts with UvrC in an incision complex.

The protein resides in the cytoplasm. Functionally, the UvrABC repair system catalyzes the recognition and processing of DNA lesions. A damage recognition complex composed of 2 UvrA and 2 UvrB subunits scans DNA for abnormalities. Upon binding of the UvrA(2)B(2) complex to a putative damaged site, the DNA wraps around one UvrB monomer. DNA wrap is dependent on ATP binding by UvrB and probably causes local melting of the DNA helix, facilitating insertion of UvrB beta-hairpin between the DNA strands. Then UvrB probes one DNA strand for the presence of a lesion. If a lesion is found the UvrA subunits dissociate and the UvrB-DNA preincision complex is formed. This complex is subsequently bound by UvrC and the second UvrB is released. If no lesion is found, the DNA wraps around the other UvrB subunit that will check the other stand for damage. This Chlorobium chlorochromatii (strain CaD3) protein is UvrABC system protein B.